The chain runs to 97 residues: Cobalt transport protein CbiN (97 aa).

Transmembrane regions (helical) follow at residues 6–26 (VLMI…YSGL) and 68–88 (SLLF…FFGY).

Belongs to the CbiN family. In terms of assembly, forms an energy-coupling factor (ECF) transporter complex composed of an ATP-binding protein (A component, CbiO), a transmembrane protein (T component, CbiQ) and 2 possible substrate-capture proteins (S components, CbiM and CbiN) of unknown stoichimetry.

It localises to the cell membrane. The protein operates within cofactor biosynthesis; adenosylcobalamin biosynthesis. Its function is as follows. Part of the energy-coupling factor (ECF) transporter complex CbiMNOQ involved in cobalt import. In Methanococcus maripaludis (strain C7 / ATCC BAA-1331), this protein is Cobalt transport protein CbiN.